Here is a 610-residue protein sequence, read N- to C-terminus: UvrABC system protein C (610 aa).

The GIY-YIG domain occupies 16-94 (SQPGVYRMYD…IKLYQPRYNV (79 aa)). The 36-residue stretch at 204-239 (DQVLTQLISRMETASQNLEFEEAARIRDQIQAVRRV) folds into the UVR domain.

It belongs to the UvrC family. As to quaternary structure, interacts with UvrB in an incision complex.

The protein localises to the cytoplasm. The UvrABC repair system catalyzes the recognition and processing of DNA lesions. UvrC both incises the 5' and 3' sides of the lesion. The N-terminal half is responsible for the 3' incision and the C-terminal half is responsible for the 5' incision. This Escherichia coli (strain SMS-3-5 / SECEC) protein is UvrABC system protein C.